Reading from the N-terminus, the 336-residue chain is Aspartate--ammonia ligase (336 aa).

The protein belongs to the class-II aminoacyl-tRNA synthetase family. AsnA subfamily.

The protein resides in the cytoplasm. The enzyme catalyses L-aspartate + NH4(+) + ATP = L-asparagine + AMP + diphosphate + H(+). It functions in the pathway amino-acid biosynthesis; L-asparagine biosynthesis; L-asparagine from L-aspartate (ammonia route): step 1/1. This chain is Aspartate--ammonia ligase, found in Ruminiclostridium cellulolyticum (strain ATCC 35319 / DSM 5812 / JCM 6584 / H10) (Clostridium cellulolyticum).